We begin with the raw amino-acid sequence, 471 residues long: 3-isopropylmalate dehydratase large subunit (471 aa).

Residues Cys346, Cys406, and Cys409 each coordinate [4Fe-4S] cluster.

It belongs to the aconitase/IPM isomerase family. LeuC type 1 subfamily. Heterodimer of LeuC and LeuD. Requires [4Fe-4S] cluster as cofactor.

It carries out the reaction (2R,3S)-3-isopropylmalate = (2S)-2-isopropylmalate. It functions in the pathway amino-acid biosynthesis; L-leucine biosynthesis; L-leucine from 3-methyl-2-oxobutanoate: step 2/4. In terms of biological role, catalyzes the isomerization between 2-isopropylmalate and 3-isopropylmalate, via the formation of 2-isopropylmaleate. The chain is 3-isopropylmalate dehydratase large subunit from Bacillus pumilus (strain SAFR-032).